We begin with the raw amino-acid sequence, 221 residues long: Probable transaldolase (221 aa).

The active-site Schiff-base intermediate with substrate is the lysine 83.

Belongs to the transaldolase family. Type 3B subfamily.

Its subcellular location is the cytoplasm. It carries out the reaction D-sedoheptulose 7-phosphate + D-glyceraldehyde 3-phosphate = D-erythrose 4-phosphate + beta-D-fructose 6-phosphate. It participates in carbohydrate degradation; pentose phosphate pathway; D-glyceraldehyde 3-phosphate and beta-D-fructose 6-phosphate from D-ribose 5-phosphate and D-xylulose 5-phosphate (non-oxidative stage): step 2/3. Functionally, transaldolase is important for the balance of metabolites in the pentose-phosphate pathway. The polypeptide is Probable transaldolase (Petrotoga mobilis (strain DSM 10674 / SJ95)).